An 836-amino-acid chain; its full sequence is Outer membrane usher protein PapC (836 aa).

An N-terminal signal peptide occupies residues 1–24 (MKDRIPFAVNNITCVILLSLFCNA). Cys-814 and Cys-832 form a disulfide bridge.

This sequence belongs to the fimbrial export usher family.

It is found in the cell outer membrane. Its function is as follows. Involved in the export and assembly of pili subunits across the outer membrane. Forms a hexameric ring-shaped pore in the outer bacterial membrane. The 2 nanometer-diameter pore allows the passage of the thin tip fibrillum. As for the rod, it probably unwinds into linear fibers which would therefore be narrow enough to pass through the pore. This Escherichia coli protein is Outer membrane usher protein PapC (papC).